The following is a 456-amino-acid chain: uncharacterized protein (456 aa).

It belongs to the herpesviridae UL49 family.

This is an uncharacterized protein from Equus caballus (Horse).